Here is a 225-residue protein sequence, read N- to C-terminus: Fibronectin type III domain-containing protein (225 aa).

A signal peptide spans 1–17 (MFSFGIILLTVVSFTNA). The Fibronectin type-III domain maps to 106-206 (PPTNVIVEST…MPLNVKTPDI (101 aa)).

Component of the organic matrix of calcified shell layers like nacre and prisms.

The protein resides in the secreted. This chain is Fibronectin type III domain-containing protein, found in Mytilus californianus (California mussel).